The chain runs to 287 residues: MSMIDDLPPLRDVIKRHALSARKSLGQNFLLDLNLTSRIARAAGPLQDATVVEIGPGPGGLTRALLAVGAKHVIAIERDERALGALEEISDRYPGRLTIINADATDFDPRPLLGTTRAKIVANLPYNIATALLIRWLSIEPWPPWYDVMVLMFQREVAERIVARENEDAYGRLGVLSNWRAETKILFDISPAAFVPQPQVTSSVVRLIPRYNPEPCDRRSLEQVAAAAFGHRRKMLRQSLKSLPADPASLAAAAGIDPTRRAETVSISGFAAMARELASIVGSGKRL.

S-adenosyl-L-methionine is bound by residues Asn28, Leu30, Gly55, Glu77, Asp103, and Asn123.

Belongs to the class I-like SAM-binding methyltransferase superfamily. rRNA adenine N(6)-methyltransferase family. RsmA subfamily.

It is found in the cytoplasm. It catalyses the reaction adenosine(1518)/adenosine(1519) in 16S rRNA + 4 S-adenosyl-L-methionine = N(6)-dimethyladenosine(1518)/N(6)-dimethyladenosine(1519) in 16S rRNA + 4 S-adenosyl-L-homocysteine + 4 H(+). In terms of biological role, specifically dimethylates two adjacent adenosines (A1518 and A1519) in the loop of a conserved hairpin near the 3'-end of 16S rRNA in the 30S particle. May play a critical role in biogenesis of 30S subunits. This chain is Ribosomal RNA small subunit methyltransferase A, found in Nitrobacter winogradskyi (strain ATCC 25391 / DSM 10237 / CIP 104748 / NCIMB 11846 / Nb-255).